The sequence spans 170 residues: Transcription factor E (170 aa).

The HTH TFE/IIEalpha-type domain maps to 1 to 93 (MKDVYLYIVE…TWYVNDEVIS (93 aa)).

This sequence belongs to the TFE family. As to quaternary structure, monomer. Interaction with RNA polymerase subunits RpoF and RpoE is necessary for Tfe stimulatory transcription activity. Able to interact with Tbp and RNA polymerase in the absence of DNA promoter. Interacts both with the preinitiation and elongation complexes.

Its function is as follows. Transcription factor that plays a role in the activation of archaeal genes transcribed by RNA polymerase. Facilitates transcription initiation by enhancing TATA-box recognition by TATA-box-binding protein (Tbp), and transcription factor B (Tfb) and RNA polymerase recruitment. Not absolutely required for transcription in vitro, but particularly important in cases where Tbp or Tfb function is not optimal. It dynamically alters the nucleic acid-binding properties of RNA polymerases by stabilizing the initiation complex and destabilizing elongation complexes. Seems to translocate with the RNA polymerase following initiation and acts by binding to the non template strand of the transcription bubble in elongation complexes. The protein is Transcription factor E of Pyrobaculum calidifontis (strain DSM 21063 / JCM 11548 / VA1).